Consider the following 308-residue polypeptide: MISRFFRHLFEALKSLKRNGWMTVAAVSSVMITLTLVAIFASVIFNTAKLATDIENNVRVVVYIRKDVEDNSQTIEKEGQTVTNNDYHKVYDSLKNMSTVKSVTFSSKEEQYEKLTEIMGDNWKIFEGDANPLYDAYIVEANAPNDVKTIAEDAKKIEGVSEVQDGGANTERLFKLASFIRVWGLGIAALLIFIAVFLISNTIRITIISRSREIQIMRLVGAKNSYIRGPFLLEGAFIGLLGAIAPSVLVFIVYQIVYQSVNKSLVGQNLSMISPDLFSPLMIALLFVIGVFIGSLGSGISMRRFLKI.

The Cytoplasmic segment spans residues 1 to 24 (MISRFFRHLFEALKSLKRNGWMTV). The chain crosses the membrane as a helical span at residues 25 to 45 (AAVSSVMITLTLVAIFASVIF). The Extracellular portion of the chain corresponds to 46–178 (NTAKLATDIE…NTERLFKLAS (133 aa)). A helical transmembrane segment spans residues 179 to 199 (FIRVWGLGIAALLIFIAVFLI). The Cytoplasmic segment spans residues 200-236 (SNTIRITIISRSREIQIMRLVGAKNSYIRGPFLLEGA). Residues 237–257 (FIGLLGAIAPSVLVFIVYQIV) form a helical membrane-spanning segment. Residues 258 to 276 (YQSVNKSLVGQNLSMISPD) lie on the Extracellular side of the membrane. The chain crosses the membrane as a helical span at residues 277 to 297 (LFSPLMIALLFVIGVFIGSLG). At 298 to 308 (SGISMRRFLKI) the chain is on the cytoplasmic side.

Belongs to the ABC-4 integral membrane protein family. FtsX subfamily. In terms of assembly, homodimer. Interacts with FtsE; forms a membrane-associated complex. Interacts (via large extracellular loop) with PcsB (via N-terminal coiled-coil domain). This interaction directs PcsB to equatorial and septal sites of dividing cells.

Its subcellular location is the cell membrane. In terms of biological role, part of the ABC transporter FtsEX involved in asymmetric cellular division facilitating the initiation of sporulation. Required in maintaining normal growth and cellular morphology. This is Cell division protein FtsX from Streptococcus pneumoniae serotype 2 (strain D39 / NCTC 7466).